The following is a 316-amino-acid chain: Ribosomal RNA small subunit methyltransferase H (316 aa).

S-adenosyl-L-methionine-binding positions include 39–41 (GGH), aspartate 56, phenylalanine 82, aspartate 103, and glutamine 110.

Belongs to the methyltransferase superfamily. RsmH family.

It is found in the cytoplasm. It catalyses the reaction cytidine(1402) in 16S rRNA + S-adenosyl-L-methionine = N(4)-methylcytidine(1402) in 16S rRNA + S-adenosyl-L-homocysteine + H(+). Functionally, specifically methylates the N4 position of cytidine in position 1402 (C1402) of 16S rRNA. In Methylacidiphilum infernorum (isolate V4) (Methylokorus infernorum (strain V4)), this protein is Ribosomal RNA small subunit methyltransferase H.